The primary structure comprises 403 residues: 8-amino-7-oxononanoate synthase (403 aa).

Substrate is bound at residue Arg22. Residue 109-110 (GF) coordinates pyridoxal 5'-phosphate. Residue His134 coordinates substrate. Residues Ser178, His206, and Thr232 each contribute to the pyridoxal 5'-phosphate site. Lys235 is subject to N6-(pyridoxal phosphate)lysine. Thr348 is a substrate binding site. A disordered region spans residues 383-403 (SNDSGSKPSIESSFELKKEAQ). Over residues 385–394 (DSGSKPSIES) the composition is skewed to polar residues.

Belongs to the class-II pyridoxal-phosphate-dependent aminotransferase family. BioF subfamily. In terms of assembly, homodimer. Pyridoxal 5'-phosphate serves as cofactor.

The catalysed reaction is 6-carboxyhexanoyl-[ACP] + L-alanine + H(+) = (8S)-8-amino-7-oxononanoate + holo-[ACP] + CO2. The protein operates within cofactor biosynthesis; biotin biosynthesis. Catalyzes the decarboxylative condensation of pimeloyl-[acyl-carrier protein] and L-alanine to produce 8-amino-7-oxononanoate (AON), [acyl-carrier protein], and carbon dioxide. The sequence is that of 8-amino-7-oxononanoate synthase from Vibrio atlanticus (strain LGP32) (Vibrio splendidus (strain Mel32)).